The following is a 154-amino-acid chain: Large ribosomal subunit protein uL23 (154 aa).

The protein belongs to the universal ribosomal protein uL23 family.

In terms of biological role, this protein binds to a specific region on the 26S rRNA. This is Large ribosomal subunit protein uL23 (RPL23A) from Fritillaria agrestis (Stinkbells).